The following is a 218-amino-acid chain: MTAQLEGIGMTSRRTRMRLVQRLREGGIESDRVLEVIGQVPRHIFLDEALSHRAYEDTSLPIGHGQTLSQPYIVARMTELLLAHAPQRVLELGTGSGYQTAVLSQLFPEIYSVERIRPLQDRARDRLRQLNVRNVLLKHADGGMGWPERGPFDGIIVTAAPVEVPRELLDQLADGGVLIAPVGEENQVLVEIIRKGNHFERHNLEPVHFVPLLGGVIR.

S69 is a catalytic residue.

Belongs to the methyltransferase superfamily. L-isoaspartyl/D-aspartyl protein methyltransferase family.

It localises to the cytoplasm. The catalysed reaction is [protein]-L-isoaspartate + S-adenosyl-L-methionine = [protein]-L-isoaspartate alpha-methyl ester + S-adenosyl-L-homocysteine. Its function is as follows. Catalyzes the methyl esterification of L-isoaspartyl residues in peptides and proteins that result from spontaneous decomposition of normal L-aspartyl and L-asparaginyl residues. It plays a role in the repair and/or degradation of damaged proteins. The chain is Protein-L-isoaspartate O-methyltransferase 1 from Marinobacter nauticus (strain ATCC 700491 / DSM 11845 / VT8) (Marinobacter aquaeolei).